The chain runs to 41 residues: MLQEFNQNQKAKVAVCLNKTNSTDLAWWRTWTSSWWANVYF.

This protein is involved in control of the biosynthesis of tryptophan. The sequence is that of trp operon leader peptide (trpL) from Vibrio parahaemolyticus serotype O3:K6 (strain RIMD 2210633).